The primary structure comprises 640 residues: Threonine--tRNA ligase (640 aa).

Residues 1–61 (MPIIALPDGN…EKDSEVNIIT (61 aa)) enclose the TGS domain. Positions 242-533 (DHRRIAKQMS…LIEHYAGRLP (292 aa)) are catalytic. 3 residues coordinate Zn(2+): Cys-333, His-384, and His-510.

The protein belongs to the class-II aminoacyl-tRNA synthetase family. Homodimer. Requires Zn(2+) as cofactor.

It is found in the cytoplasm. The enzyme catalyses tRNA(Thr) + L-threonine + ATP = L-threonyl-tRNA(Thr) + AMP + diphosphate + H(+). Its function is as follows. Catalyzes the attachment of threonine to tRNA(Thr) in a two-step reaction: L-threonine is first activated by ATP to form Thr-AMP and then transferred to the acceptor end of tRNA(Thr). Also edits incorrectly charged L-seryl-tRNA(Thr). The sequence is that of Threonine--tRNA ligase from Prochlorococcus marinus (strain MIT 9313).